The following is a 430-amino-acid chain: Enolase (430 aa).

Positions 1–140 (MPYIVDVYAR…YQYLGGFNSK (140 aa)) are sufficient for secretion. Position 141 is a phosphothreonine (Thr141). Gln163 lines the (2R)-2-phosphoglycerate pocket. The active-site Proton donor is the Glu205. A Mg(2+)-binding site is contributed by Asp242. Ser259 carries the phosphoserine modification. A Phosphotyrosine modification is found at Tyr281. The Mg(2+) site is built by Glu287 and Asp314. Ser325 carries the post-translational modification Phosphoserine. Lys339, Arg368, Ser369, and Lys390 together coordinate (2R)-2-phosphoglycerate. The active-site Proton acceptor is the Lys339.

The protein belongs to the enolase family. In terms of assembly, homooctamer. Component of the RNA degradosome complex composed of rny, rnjA, rnjB, pnp, pfkA and eno (although rnjA and rnjB's presence is controversial). Requires Mg(2+) as cofactor. Phosphorylated during sporulation.

It is found in the cytoplasm. It localises to the secreted. The protein localises to the cell surface. The enzyme catalyses (2R)-2-phosphoglycerate = phosphoenolpyruvate + H2O. Its pathway is carbohydrate degradation; glycolysis; pyruvate from D-glyceraldehyde 3-phosphate: step 4/5. With respect to regulation, covalent binding to the substrate (probably 2-PG) at Lys-339 of a small fraction of enolase causes inactivation of the enzyme, and possibly serves as a signal for the export of the protein. Citrate acts as a non-competitive inhibitor for both forward and reverse reactions, probably by chelating Mg(2+). In terms of biological role, catalyzes the reversible conversion of 2-phosphoglycerate (2-PG) into phosphoenolpyruvate (PEP). It is essential for the degradation of carbohydrates via glycolysis. A component of the RNA degradosome, a multi-enzyme complex involved in RNA processing and messenger RNA degradation. This is Enolase from Bacillus subtilis (strain 168).